A 466-amino-acid chain; its full sequence is Argininosuccinate lyase (466 aa).

It belongs to the lyase 1 family. Argininosuccinate lyase subfamily.

The protein resides in the cytoplasm. It carries out the reaction 2-(N(omega)-L-arginino)succinate = fumarate + L-arginine. It functions in the pathway amino-acid biosynthesis; L-arginine biosynthesis; L-arginine from L-ornithine and carbamoyl phosphate: step 3/3. The chain is Argininosuccinate lyase from Syntrophobacter fumaroxidans (strain DSM 10017 / MPOB).